The sequence spans 683 residues: DNA-directed RNA polymerase subunit beta' (683 aa).

Positions 69, 71, 87, and 90 each coordinate Zn(2+). The Mg(2+) site is built by Asp492, Asp494, and Asp496.

It belongs to the RNA polymerase beta' chain family. RpoC1 subfamily. In terms of assembly, in plastids the minimal PEP RNA polymerase catalytic core is composed of four subunits: alpha, beta, beta', and beta''. When a (nuclear-encoded) sigma factor is associated with the core the holoenzyme is formed, which can initiate transcription. The cofactor is Mg(2+). Zn(2+) serves as cofactor.

The protein localises to the plastid. The protein resides in the chloroplast. It catalyses the reaction RNA(n) + a ribonucleoside 5'-triphosphate = RNA(n+1) + diphosphate. Functionally, DNA-dependent RNA polymerase catalyzes the transcription of DNA into RNA using the four ribonucleoside triphosphates as substrates. This Coffea arabica (Arabian coffee) protein is DNA-directed RNA polymerase subunit beta'.